A 465-amino-acid polypeptide reads, in one-letter code: Mitochondrial distribution and morphology protein 10 (465 aa).

This sequence belongs to the MDM10 family. In terms of assembly, component of the ER-mitochondria encounter structure (ERMES) or MDM complex, composed of MMM1, MDM10, MDM12 and MDM34. Associates with the mitochondrial outer membrane sorting assembly machinery SAM(core) complex.

The protein localises to the mitochondrion outer membrane. Functionally, component of the ERMES/MDM complex, which serves as a molecular tether to connect the endoplasmic reticulum and mitochondria. Components of this complex are involved in the control of mitochondrial shape and protein biogenesis and may function in phospholipid exchange. MDM10 is involved in the late assembly steps of the general translocase of the mitochondrial outer membrane (TOM complex). Functions in the TOM40-specific route of the assembly of outer membrane beta-barrel proteins, including the association of TOM40 with the receptor TOM22 and small TOM proteins. Can associate with the SAM(core) complex as well as the MDM12-MMM1 complex, both involved in late steps of the major beta-barrel assembly pathway, that is responsible for biogenesis of all outer membrane beta-barrel proteins. May act as a switch that shuttles between both complexes and channels precursor proteins into the TOM40-specific pathway. Plays a role in mitochondrial morphology and in the inheritance of mitochondria. This Eremothecium gossypii (strain ATCC 10895 / CBS 109.51 / FGSC 9923 / NRRL Y-1056) (Yeast) protein is Mitochondrial distribution and morphology protein 10.